We begin with the raw amino-acid sequence, 879 residues long: Valine--tRNA ligase (879 aa).

The short motif at 45-55 (PNVTGKLHLGH) is the 'HIGH' region element. The 'KMSKS' region signature appears at 521-525 (KMSKS). ATP is bound at residue K524. Positions 806–879 (LTELVNVDEE…ERIQDLKESK (74 aa)) form a coiled coil.

It belongs to the class-I aminoacyl-tRNA synthetase family. ValS type 1 subfamily. In terms of assembly, monomer.

The protein localises to the cytoplasm. It catalyses the reaction tRNA(Val) + L-valine + ATP = L-valyl-tRNA(Val) + AMP + diphosphate. Functionally, catalyzes the attachment of valine to tRNA(Val). As ValRS can inadvertently accommodate and process structurally similar amino acids such as threonine, to avoid such errors, it has a 'posttransfer' editing activity that hydrolyzes mischarged Thr-tRNA(Val) in a tRNA-dependent manner. This Lactobacillus acidophilus (strain ATCC 700396 / NCK56 / N2 / NCFM) protein is Valine--tRNA ligase.